The primary structure comprises 1006 residues: MDSDDDYNGPADTNPRLEDEESDLDEKYPNRPRNHSTTLPFHVLFQTLFYPLSEIKKKPAGPARKKVGPHGLSSVNLTPLEKRRDIIDRFISRWRKEVGDDIYPAFRLILPDKDRDRAMYGMKEKAIGKLLIRIMKIDKNSEDALNLLNWKLPGQTTTSSMAGDFAGRCFGVLSKRPMRTEVGDMTIEEVNEKLDHLSAASKENQQLPILTEFYRRMNPEELMWLIRIILRQMKVGATERTFFDVFHPDAENLYSISSSLRRVCWELHDPNIRLEAEDRGITLMQCFQPQLAQFQMHSLDRMISRMRLTEDDPVFWIEEKLDGERMQLHMDSNDSVPGGRTFRFWSRKAKDYTYLYGNGIQDENGALTRYLSDAFADGVESLILDGEMITWDTEQDAIAPFGTLKTAALSEQRNPYSSTTRPLFRIFDILYLNGRDLTRYTLRDRRNALQKSIKPVYRRFEIHPYEEATGKTEIEEALRRVVEEASEGLVLKNPRSPYRLNERHDDWMKVKPEYMTEFGESLDVVVIGGYYGSGHRGGGLSSFLCGLRVDDAHSSQGMVASKCYSFCKVGGGFTAADYANIRHHTDGKWHEWKSRKPPTTYIELAGGDAQYERPDMWIKPEDSVVLCVKAASVAVSDQFRIGLTLRFPRFKKLRMDKDWKSALSVQEFLDLKANAERERKEKEFNVDNSRKKRAKRDNKKPLAIVGYSAEAEAQYTGPSGNIFEGLNFYITTDSNTPVKKSKAELEQLVKANGGKFFQTSNAAPSTICIADRRTVKAASLQKSGNVNIIRPSWILDCIRQSEIDAGLPDSLLPLEPRHVFFATQDKKEEIAASVDRFNDSYARNTTNDELKEILKQMSKDHHFHASQNPKIVRKLNERIQEKVNAGWEMPSGWLFKGLTILFPQNDKVDDAEVDETSQTHQQYRLNLARNTVRFAGANVVDSKSSSVTHIVVAPGSSSSDVSSIRKSHSAKPGKKVPHLVTAEWIEECWKQRTLLGEEGFQPSRGT.

A disordered region spans residues 1 to 36 (MDSDDDYNGPADTNPRLEDEESDLDEKYPNRPRNHS). Glu318, Lys320, Leu321, Arg325, Glu387, Phe427, Glu487, Lys492, Lys509, and Lys511 together coordinate ATP. Lys320 functions as the N6-AMP-lysine intermediate in the catalytic mechanism. A Mg(2+)-binding site is contributed by Glu387. Glu487 provides a ligand contact to Mg(2+). BRCT domains are found at residues 718-811 (PSGN…PDSL) and 890-1002 (PSGW…GFQP).

The protein belongs to the ATP-dependent DNA ligase family. Requires Mg(2+) as cofactor.

It is found in the nucleus. It catalyses the reaction ATP + (deoxyribonucleotide)n-3'-hydroxyl + 5'-phospho-(deoxyribonucleotide)m = (deoxyribonucleotide)n+m + AMP + diphosphate.. Its function is as follows. DNA ligase involved in DNA non-homologous end joining (NHEJ); required for double-strand break (DSB) repair. The sequence is that of DNA ligase 4 (lig4) from Aspergillus oryzae (strain ATCC 42149 / RIB 40) (Yellow koji mold).